We begin with the raw amino-acid sequence, 1165 residues long: Autophagy-related protein 11 (1165 aa).

Coiled coils occupy residues 239 to 304 and 670 to 853; these read NKLN…YKNM and DNIR…KQKK.

It belongs to the ATG11 family. In terms of assembly, homodimer and potential homooligomers.

The protein resides in the preautophagosomal structure membrane. In terms of biological role, plays an essential role in both non-selective and selective autophagy such as mitophagy. Recruits mitochondria for their selective degradation via autophagy (mitophagy) during starvation, through its interaction with ATG32. Works as scaffold proteins that recruit ATG proteins to the pre-autophagosome (PAS), the site of vesicle/autophagosome formation. Required for ATG9 anterograde transport from the mitochondria to the PAS. The sequence is that of Autophagy-related protein 11 from Candida albicans (strain SC5314 / ATCC MYA-2876) (Yeast).